A 92-amino-acid chain; its full sequence is Small ribosomal subunit protein uS19c (92 aa).

It belongs to the universal ribosomal protein uS19 family.

It is found in the plastid. Protein S19 forms a complex with S13 that binds strongly to the 16S ribosomal RNA. The chain is Small ribosomal subunit protein uS19c from Aneura mirabilis (Parasitic liverwort).